The following is a 36-amino-acid chain: uncharacterized protein (36 aa).

This is an uncharacterized protein from Escherichia coli (strain K12).